A 317-amino-acid chain; its full sequence is Retinol dehydrogenase 16 (317 aa).

33–57 (FITGCDSGFGKLLARQLDARGLRVL) provides a ligand contact to NAD(+). Residue Ser164 coordinates substrate. Tyr176 functions as the Proton acceptor in the catalytic mechanism. Residues 289–309 (LLYLPMSYMPTFLVDAIMYWV) form a helical membrane-spanning segment.

Belongs to the short-chain dehydrogenases/reductases (SDR) family. As to quaternary structure, homodimer. Post-translationally, not N-glycosylated. Highly expressed in adult liver (at protein level). Detected in endometrium, liver and foreskin. Detected in the spineous layers of adult skin, and at lower levels in basal and granular skin layers. Detected in fetal liver and lung.

It localises to the microsome membrane. Its subcellular location is the endoplasmic reticulum membrane. It catalyses the reaction all-trans-retinol--[retinol-binding protein] + NAD(+) = all-trans-retinal--[retinol-binding protein] + NADH + H(+). It carries out the reaction all-trans-retinol + NAD(+) = all-trans-retinal + NADH + H(+). The enzyme catalyses 13-cis-retinol + NAD(+) = 13-cis-retinal + NADH + H(+). The catalysed reaction is 11-cis-retinol + NAD(+) = 11-cis-retinal + NADH + H(+). It catalyses the reaction 9-cis-retinol + NAD(+) = 9-cis-retinal + NADH + H(+). It carries out the reaction 5alpha-androstane-3alpha,17beta-diol + NAD(+) = 17beta-hydroxy-5alpha-androstan-3-one + NADH + H(+). The enzyme catalyses androsterone + NAD(+) = 5alpha-androstan-3,17-dione + NADH + H(+). The protein operates within cofactor metabolism; retinol metabolism. Inhibited by citral, perillyl alcohol, geraniol, farnesol and geranyl geraniol. Its function is as follows. Oxidoreductase with a preference for NAD. Oxidizes all-trans-retinol, 9-cis-retinol, 11-cis-retinol and 13-cis-retinol to the corresponding aldehydes. Has higher activity towards CRBP-bound retinol than with free retinol. Also oxidizes 3-alpha-hydroxysteroids. Oxidizes androstanediol and androsterone to dihydrotestosterone and androstanedione. Can also catalyze the reverse reaction. The sequence is that of Retinol dehydrogenase 16 from Homo sapiens (Human).